Consider the following 507-residue polypeptide: MTLRPGQMTLADLRHIYQHPVKITLDESAYAPIQQSVDCVQKILAEKRTAYGINTGFGLLASTRIATEDLENLQRSIVLSHAAGVGEPNDDAIVRLIMVLKINSLARGFSGIRLEVIQALITLVNAQVYPHIPLKGSVGASGDLAPLAHMSLLLLGEGKARYQGEWLDARAALAKAGLQPLTLAAKEGLALLNGTQVSTAYALRGLFEAEDLYAAASVFGSLTVEAALGSRSPFDARIHAVRGQRGQIDAARTYRHLLGERSEVSESHRNCDKVQDPYSLRCQPQVMGACLTQMRQAAEVLAIESNAVSDNPLVFADQGDVLSGGNFHAEPVAMAADNLALALAEIGSLAERRISLLMDKHMSQLPPFLVENGGVNSGFMIAQVTAAALTSENKGLAFPSSVDSIPTSANQEDHVSMAPRAGKRLWEMAENVRGILAVEWLAACQGLDLRKGLKTSDALEPARLLLRKHVAYYEKDRFFAPDIEAASQLIALRHMNELMPAHLLPSL.

Positions 140-142 form a cross-link, 5-imidazolinone (Ala-Gly); sequence ASG. Ser141 is modified (2,3-didehydroalanine (Ser)).

The protein belongs to the PAL/histidase family. Post-translationally, contains an active site 4-methylidene-imidazol-5-one (MIO), which is formed autocatalytically by cyclization and dehydration of residues Ala-Ser-Gly.

Its subcellular location is the cytoplasm. The enzyme catalyses L-histidine = trans-urocanate + NH4(+). The protein operates within amino-acid degradation; L-histidine degradation into L-glutamate; N-formimidoyl-L-glutamate from L-histidine: step 1/3. The protein is Histidine ammonia-lyase of Yersinia enterocolitica serotype O:8 / biotype 1B (strain NCTC 13174 / 8081).